Reading from the N-terminus, the 166-residue chain is NAD(P)H-quinone oxidoreductase subunit I, chloroplastic (166 aa).

4Fe-4S ferredoxin-type domains lie at 55–84 and 95–124; these read GRIHFEFDKCIACEVCVRVCPIDLPVVDWK and LNYSIDFGICIFCGNCVEYCPTNCLSMTEE. Residues Cys-64, Cys-67, Cys-70, Cys-74, Cys-104, Cys-107, Cys-110, and Cys-114 each coordinate [4Fe-4S] cluster.

Belongs to the complex I 23 kDa subunit family. As to quaternary structure, NDH is composed of at least 16 different subunits, 5 of which are encoded in the nucleus. It depends on [4Fe-4S] cluster as a cofactor.

The protein localises to the plastid. It localises to the chloroplast thylakoid membrane. The catalysed reaction is a plastoquinone + NADH + (n+1) H(+)(in) = a plastoquinol + NAD(+) + n H(+)(out). The enzyme catalyses a plastoquinone + NADPH + (n+1) H(+)(in) = a plastoquinol + NADP(+) + n H(+)(out). In terms of biological role, NDH shuttles electrons from NAD(P)H:plastoquinone, via FMN and iron-sulfur (Fe-S) centers, to quinones in the photosynthetic chain and possibly in a chloroplast respiratory chain. The immediate electron acceptor for the enzyme in this species is believed to be plastoquinone. Couples the redox reaction to proton translocation, and thus conserves the redox energy in a proton gradient. The sequence is that of NAD(P)H-quinone oxidoreductase subunit I, chloroplastic from Chaenactis santolinoides (Santolina pincushion).